We begin with the raw amino-acid sequence, 668 residues long: DNA ligase (668 aa).

NAD(+) is bound by residues 34–38 (DTEYD), 83–84 (SL), and Glu-114. Catalysis depends on Lys-116, which acts as the N6-AMP-lysine intermediate. Arg-137, Glu-171, Lys-286, and Lys-310 together coordinate NAD(+). 4 residues coordinate Zn(2+): Cys-404, Cys-407, Cys-422, and Cys-427. The 81-residue stretch at 588–668 (NSDSIIANKT…FFDLLKSEKG (81 aa)) folds into the BRCT domain.

The protein belongs to the NAD-dependent DNA ligase family. LigA subfamily. Mg(2+) is required as a cofactor. Mn(2+) serves as cofactor.

It catalyses the reaction NAD(+) + (deoxyribonucleotide)n-3'-hydroxyl + 5'-phospho-(deoxyribonucleotide)m = (deoxyribonucleotide)n+m + AMP + beta-nicotinamide D-nucleotide.. In terms of biological role, DNA ligase that catalyzes the formation of phosphodiester linkages between 5'-phosphoryl and 3'-hydroxyl groups in double-stranded DNA using NAD as a coenzyme and as the energy source for the reaction. It is essential for DNA replication and repair of damaged DNA. This Mycoplasma capricolum subsp. capricolum (strain California kid / ATCC 27343 / NCTC 10154) protein is DNA ligase.